Consider the following 404-residue polypeptide: Cysteine desulfurase IscS (404 aa).

Pyridoxal 5'-phosphate-binding positions include 75–76 (AT), Asn-155, Gln-183, and 203–205 (SAH). The residue at position 206 (Lys-206) is an N6-(pyridoxal phosphate)lysine. Position 243 (Thr-243) interacts with pyridoxal 5'-phosphate. Cys-328 serves as the catalytic Cysteine persulfide intermediate. Cys-328 contacts [2Fe-2S] cluster.

This sequence belongs to the class-V pyridoxal-phosphate-dependent aminotransferase family. NifS/IscS subfamily. Homodimer. Forms a heterotetramer with IscU, interacts with other sulfur acceptors. The cofactor is pyridoxal 5'-phosphate.

Its subcellular location is the cytoplasm. The catalysed reaction is (sulfur carrier)-H + L-cysteine = (sulfur carrier)-SH + L-alanine. It functions in the pathway cofactor biosynthesis; iron-sulfur cluster biosynthesis. Functionally, master enzyme that delivers sulfur to a number of partners involved in Fe-S cluster assembly, tRNA modification or cofactor biosynthesis. Catalyzes the removal of elemental sulfur atoms from cysteine to produce alanine. Functions as a sulfur delivery protein for Fe-S cluster synthesis onto IscU, an Fe-S scaffold assembly protein, as well as other S acceptor proteins. This chain is Cysteine desulfurase IscS, found in Shewanella sediminis (strain HAW-EB3).